The chain runs to 272 residues: Ethanolamine ammonia-lyase small subunit (272 aa).

The adenosylcob(III)alamin site is built by Val-161, Glu-182, and Cys-211.

It belongs to the EutC family. In terms of assembly, the basic unit is a heterodimer which dimerizes to form tetramers. The heterotetramers trimerize; 6 large subunits form a core ring with 6 small subunits projecting outwards. Adenosylcob(III)alamin serves as cofactor.

The protein resides in the bacterial microcompartment. The catalysed reaction is ethanolamine = acetaldehyde + NH4(+). It participates in amine and polyamine degradation; ethanolamine degradation. Functionally, catalyzes the deamination of various vicinal amino-alcohols to oxo compounds. Allows this organism to utilize ethanolamine as the sole source of nitrogen and carbon in the presence of external vitamin B12. In Pseudomonas putida (strain GB-1), this protein is Ethanolamine ammonia-lyase small subunit.